Reading from the N-terminus, the 258-residue chain is Serine protease VLSP-3 (258 aa).

Positions 1–18 (MVLIRVLANLLVLQLSYA) are cleaved as a signal peptide. Positions 19-24 (QKSSEL) are excised as a propeptide. In terms of domain architecture, Peptidase S1 spans 25–249 (VIGGDECNIN…YTDWIQSIIA (225 aa)). Disulfide bonds link Cys-31–Cys-163, Cys-50–Cys-66, Cys-98–Cys-256, Cys-142–Cys-210, Cys-174–Cys-189, and Cys-200–Cys-225. N-linked (GlcNAc...) asparagine glycosylation is present at Asn-44. His-65 serves as the catalytic Charge relay system. N-linked (GlcNAc...) asparagine glycosylation is found at Asn-79 and Asn-103. Residue Asp-110 is the Charge relay system of the active site. N-linked (GlcNAc...) asparagine glycans are attached at residues Asn-154 and Asn-170. Ser-204 functions as the Charge relay system in the catalytic mechanism. A glycan (N-linked (GlcNAc...) asparagine) is linked at Asn-251.

It belongs to the peptidase S1 family. Snake venom subfamily. In terms of assembly, monomer. In terms of tissue distribution, expressed by the venom gland.

It localises to the secreted. In terms of biological role, snake venom serine protease that may act in the hemostasis system of the prey. This Macrovipera lebetinus (Levantine viper) protein is Serine protease VLSP-3.